Consider the following 568-residue polypeptide: Sulfite reductase [NADPH] hemoprotein beta-component (568 aa).

Positions 425, 431, 470, and 474 each coordinate [4Fe-4S] cluster. Cysteine 474 contacts siroheme.

Belongs to the nitrite and sulfite reductase 4Fe-4S domain family. In terms of assembly, alpha(8)-beta(8). The alpha component is a flavoprotein, the beta component is a hemoprotein. The cofactor is siroheme. It depends on [4Fe-4S] cluster as a cofactor.

The catalysed reaction is hydrogen sulfide + 3 NADP(+) + 3 H2O = sulfite + 3 NADPH + 4 H(+). The protein operates within sulfur metabolism; hydrogen sulfide biosynthesis; hydrogen sulfide from sulfite (NADPH route): step 1/1. Component of the sulfite reductase complex that catalyzes the 6-electron reduction of sulfite to sulfide. This is one of several activities required for the biosynthesis of L-cysteine from sulfate. The protein is Sulfite reductase [NADPH] hemoprotein beta-component of Xanthomonas euvesicatoria pv. vesicatoria (strain 85-10) (Xanthomonas campestris pv. vesicatoria).